A 368-amino-acid chain; its full sequence is Protein pxr1 (368 aa).

Disordered regions lie at residues 1-28 and 161-339; these read MGLAAPKNKIKLSHDPNNTRWSGNTDSF and KEKA…PMGI. Positions 15 to 27 are enriched in polar residues; it reads DPNNTRWSGNTDS. Residues 25–79 form the G-patch domain; the sequence is TDSFGHRMMKSQGWTPGEYLGAKDAAHAEFHTEANASHIRVVIKDNTLGLGAKIG. Residues 168 to 182 are compositionally biased toward acidic residues; the sequence is SSEESDSSSDEEEEK. 4 stretches are compositionally biased toward basic residues: residues 209-226, 242-254, 271-283, and 301-312; these read SKKSKKEKKEKKEKKSKK, KSKKSKKDRKSKS, KARKKEKKEKKRK, and SSKKSKKDKHKS. Low complexity predominate over residues 313 to 324; it reads PSTSKTSTKEST. Over residues 325-334 the composition is skewed to polar residues; the sequence is PIVSESSGRS.

It belongs to the PINX1 family.

The protein localises to the nucleus. Its subcellular location is the nucleolus. Involved in rRNA-processing at A0, A1 and A2 sites and negatively regulates telomerase. The chain is Protein pxr1 (pxr1) from Botryotinia fuckeliana (strain B05.10) (Noble rot fungus).